The following is a 720-amino-acid chain: Phosphoribosylformylglycinamidine synthase subunit PurL (720 aa).

The active site involves His-47. The ATP site is built by Tyr-50 and Lys-89. Glu-91 is a binding site for Mg(2+). Residues 92-95 and Arg-114 contribute to the substrate site; that span reads SHNH. His-93 functions as the Proton acceptor in the catalytic mechanism. Asp-115 serves as a coordination point for Mg(2+). Gln-238 provides a ligand contact to substrate. Asp-266 is a binding site for Mg(2+). 310 to 312 provides a ligand contact to substrate; it reads ESQ. The ATP site is built by Asp-488 and Gly-525. Asn-526 contacts Mg(2+). Ser-528 contributes to the substrate binding site.

This sequence belongs to the FGAMS family. In terms of assembly, monomer. Part of the FGAM synthase complex composed of 1 PurL, 1 PurQ and 2 PurS subunits.

Its subcellular location is the cytoplasm. The enzyme catalyses N(2)-formyl-N(1)-(5-phospho-beta-D-ribosyl)glycinamide + L-glutamine + ATP + H2O = 2-formamido-N(1)-(5-O-phospho-beta-D-ribosyl)acetamidine + L-glutamate + ADP + phosphate + H(+). The protein operates within purine metabolism; IMP biosynthesis via de novo pathway; 5-amino-1-(5-phospho-D-ribosyl)imidazole from N(2)-formyl-N(1)-(5-phospho-D-ribosyl)glycinamide: step 1/2. Its function is as follows. Part of the phosphoribosylformylglycinamidine synthase complex involved in the purines biosynthetic pathway. Catalyzes the ATP-dependent conversion of formylglycinamide ribonucleotide (FGAR) and glutamine to yield formylglycinamidine ribonucleotide (FGAM) and glutamate. The FGAM synthase complex is composed of three subunits. PurQ produces an ammonia molecule by converting glutamine to glutamate. PurL transfers the ammonia molecule to FGAR to form FGAM in an ATP-dependent manner. PurS interacts with PurQ and PurL and is thought to assist in the transfer of the ammonia molecule from PurQ to PurL. In Cereibacter sphaeroides (strain ATCC 17023 / DSM 158 / JCM 6121 / CCUG 31486 / LMG 2827 / NBRC 12203 / NCIMB 8253 / ATH 2.4.1.) (Rhodobacter sphaeroides), this protein is Phosphoribosylformylglycinamidine synthase subunit PurL.